The chain runs to 378 residues: TelA-like protein SAUSA300_1299 (378 aa).

This sequence belongs to the TelA family.

The protein is TelA-like protein SAUSA300_1299 of Staphylococcus aureus (strain USA300).